A 185-amino-acid polypeptide reads, in one-letter code: Elongation factor P (185 aa).

Belongs to the elongation factor P family.

The protein localises to the cytoplasm. It functions in the pathway protein biosynthesis; polypeptide chain elongation. Functionally, involved in peptide bond synthesis. Stimulates efficient translation and peptide-bond synthesis on native or reconstituted 70S ribosomes in vitro. Probably functions indirectly by altering the affinity of the ribosome for aminoacyl-tRNA, thus increasing their reactivity as acceptors for peptidyl transferase. This chain is Elongation factor P, found in Endomicrobium trichonymphae.